Reading from the N-terminus, the 94-residue chain is Small ribosomal subunit protein bS20 (94 aa).

Belongs to the bacterial ribosomal protein bS20 family.

In terms of biological role, binds directly to 16S ribosomal RNA. This chain is Small ribosomal subunit protein bS20, found in Symbiobacterium thermophilum (strain DSM 24528 / JCM 14929 / IAM 14863 / T).